The sequence spans 208 residues: Small ribosomal subunit protein uS4 (208 aa).

One can recognise an S4 RNA-binding domain in the interval 98-161 (QRLDNVVYRM…KNNPQIVRAI (64 aa)).

This sequence belongs to the universal ribosomal protein uS4 family. In terms of assembly, part of the 30S ribosomal subunit. Contacts protein S5. The interaction surface between S4 and S5 is involved in control of translational fidelity.

Functionally, one of the primary rRNA binding proteins, it binds directly to 16S rRNA where it nucleates assembly of the body of the 30S subunit. With S5 and S12 plays an important role in translational accuracy. This is Small ribosomal subunit protein uS4 from Campylobacter concisus (strain 13826).